The primary structure comprises 755 residues: Catalase-peroxidase (755 aa).

The segment at residues Trp-91 to Tyr-245 is a cross-link (tryptophyl-tyrosyl-methioninium (Trp-Tyr) (with M-271)). Catalysis depends on His-92, which acts as the Proton acceptor. Residues Asp-193–Glu-229 form a disordered region. A compositionally biased stretch (basic and acidic residues) spans Pro-215–Arg-224. Positions Tyr-245–Met-271 form a cross-link, tryptophyl-tyrosyl-methioninium (Tyr-Met) (with W-91). Heme is bound at residue His-286.

The protein belongs to the peroxidase family. Peroxidase/catalase subfamily. Homodimer or homotetramer. The cofactor is heme b. Post-translationally, formation of the three residue Trp-Tyr-Met cross-link is important for the catalase, but not the peroxidase activity of the enzyme.

It carries out the reaction H2O2 + AH2 = A + 2 H2O. The catalysed reaction is 2 H2O2 = O2 + 2 H2O. Bifunctional enzyme with both catalase and broad-spectrum peroxidase activity. The protein is Catalase-peroxidase of Pseudomonas fluorescens (strain Pf0-1).